The chain runs to 511 residues: Coatomer subunit delta (511 aa).

The span at 167-177 (QQARRDAERQG) shows a compositional bias: basic and acidic residues. A disordered region spans residues 167–188 (QQARRDAERQGKKAPGFGGFGS). Phosphoserine is present on S223. K233 and K241 each carry N6-acetyllysine. S244 is subject to Phosphoserine. The MHD domain occupies 271 to 511 (MESVHMKIEE…TFLVDKYEIL (241 aa)). N6-acetyllysine is present on residues K309 and K351. The residue at position 493 (S493) is a Phosphoserine.

It belongs to the adaptor complexes medium subunit family. Delta-COP subfamily. Oligomeric complex that consists of at least the alpha, beta, beta', gamma, delta, epsilon and zeta subunits.

Its subcellular location is the cytoplasm. It is found in the golgi apparatus membrane. The protein resides in the cytoplasmic vesicle. The protein localises to the COPI-coated vesicle membrane. Its function is as follows. The coatomer is a cytosolic protein complex that binds to dilysine motifs and reversibly associates with Golgi non-clathrin-coated vesicles, which further mediate biosynthetic protein transport from the ER, via the Golgi up to the trans Golgi network. Coatomer complex is required for budding from Golgi membranes, and is essential for the retrograde Golgi-to-ER transport of dilysine-tagged proteins. In mammals, the coatomer can only be recruited by membranes associated to ADP-ribosylation factors (ARFs), which are small GTP-binding proteins; the complex also influences the Golgi structural integrity, as well as the processing, activity, and endocytic recycling of LDL receptors. This chain is Coatomer subunit delta (ARCN1), found in Pongo abelii (Sumatran orangutan).